The primary structure comprises 160 residues: Cytochrome b6-f complex subunit 4 (160 aa).

Transmembrane regions (helical) follow at residues 36–56 (LLYV…GLAI), 95–115 (LLGV…PFIE), and 131–151 (TVFL…TMPI).

Belongs to the cytochrome b family. PetD subfamily. As to quaternary structure, the 4 large subunits of the cytochrome b6-f complex are cytochrome b6, subunit IV (17 kDa polypeptide, petD), cytochrome f and the Rieske protein, while the 4 small subunits are petG, petL, petM and petN. The complex functions as a dimer.

The protein resides in the plastid. It is found in the chloroplast thylakoid membrane. Its function is as follows. Component of the cytochrome b6-f complex, which mediates electron transfer between photosystem II (PSII) and photosystem I (PSI), cyclic electron flow around PSI, and state transitions. The polypeptide is Cytochrome b6-f complex subunit 4 (Pyropia yezoensis (Susabi-nori)).